Consider the following 245-residue polypeptide: 2-C-methyl-D-erythritol 4-phosphate cytidylyltransferase (245 aa).

The protein belongs to the IspD/TarI cytidylyltransferase family. IspD subfamily.

It catalyses the reaction 2-C-methyl-D-erythritol 4-phosphate + CTP + H(+) = 4-CDP-2-C-methyl-D-erythritol + diphosphate. It participates in isoprenoid biosynthesis; isopentenyl diphosphate biosynthesis via DXP pathway; isopentenyl diphosphate from 1-deoxy-D-xylulose 5-phosphate: step 2/6. In terms of biological role, catalyzes the formation of 4-diphosphocytidyl-2-C-methyl-D-erythritol from CTP and 2-C-methyl-D-erythritol 4-phosphate (MEP). The sequence is that of 2-C-methyl-D-erythritol 4-phosphate cytidylyltransferase from Chloroherpeton thalassium (strain ATCC 35110 / GB-78).